Here is a 540-residue protein sequence, read N- to C-terminus: CTP synthase (540 aa).

The interval 1 to 265 (MVRFIFITGG…DNKVLKFFNL (265 aa)) is amidoligase domain. Ser-13 contributes to the CTP binding site. Ser-13 contributes to the UTP binding site. Residues 14-19 (SLGKGL) and Asp-71 each bind ATP. Mg(2+) is bound by residues Asp-71 and Glu-139. CTP contacts are provided by residues 146–148 (DIE), 186–191 (KTKPTQ), and Lys-222. UTP contacts are provided by residues 186-191 (KTKPTQ) and Lys-222. The region spanning 290-539 (RIAIIAKYHK…VEAAIKYNKN (250 aa)) is the Glutamine amidotransferase type-1 domain. Residue Gly-352 coordinates L-glutamine. The active-site Nucleophile; for glutamine hydrolysis is the Cys-379. L-glutamine is bound by residues 380–383 (LGMQ), Glu-403, and Arg-467. Catalysis depends on residues His-512 and Glu-514.

The protein belongs to the CTP synthase family. Homotetramer.

The catalysed reaction is UTP + L-glutamine + ATP + H2O = CTP + L-glutamate + ADP + phosphate + 2 H(+). It catalyses the reaction L-glutamine + H2O = L-glutamate + NH4(+). It carries out the reaction UTP + NH4(+) + ATP = CTP + ADP + phosphate + 2 H(+). The protein operates within pyrimidine metabolism; CTP biosynthesis via de novo pathway; CTP from UDP: step 2/2. Its activity is regulated as follows. Allosterically activated by GTP, when glutamine is the substrate; GTP has no effect on the reaction when ammonia is the substrate. The allosteric effector GTP functions by stabilizing the protein conformation that binds the tetrahedral intermediate(s) formed during glutamine hydrolysis. Inhibited by the product CTP, via allosteric rather than competitive inhibition. Catalyzes the ATP-dependent amination of UTP to CTP with either L-glutamine or ammonia as the source of nitrogen. Regulates intracellular CTP levels through interactions with the four ribonucleotide triphosphates. The polypeptide is CTP synthase (Rickettsia bellii (strain RML369-C)).